We begin with the raw amino-acid sequence, 1338 residues long: Nonribosomal peptide synthetase astA (1338 aa).

A disordered region spans residues 22–52 (IAVVSGDIPSPHPKNEPSQTSTLHIPRDSDL). An adenylation region spans residues 271-681 (FQARCRQNPS…GRKGAEVKLR (411 aa)). The Carrier domain maps to 820–893 (TPVEIIIHDA…SLAEKCSAGG (74 aa)). O-(pantetheine 4'-phosphoryl)serine is present on Ser854. Residues 949 to 1336 (TFIFRLSGPV…IIRFLDSPDS (388 aa)) are condensation.

Belongs to the NRP synthetase family.

It carries out the reaction 7beta,14,16-trihydroxyconfertifolin + benzoate + H(+) = dideacetyl astellolide A + H2O. The catalysed reaction is 7beta,14,16-trihydroxyconfertifolin + 4-hydroxybenzoate + H(+) = dideacetyl astellolide B + H2O. The protein operates within secondary metabolite biosynthesis; terpenoid biosynthesis. Functionally, nonribosomal peptide synthetase; part of the gene cluster that mediates the biosynthesis of astellolides, drimane-type sesquiterpene esters that show antimicrobial, anti-inflammatory, and anti-tumor activities. The first step in astellolide biosynthesis is performed by the sesquiterpene cyclase astC that catalyzes the formation of drimanyl pyrophosphate from farnesyl pyrophosphate. Drimanyl pyrophosphate is then dephosphorylated by the sesquiterpene phosphatase astI to produce drimanyl monophosphate which is further dephosphorylated to drim-8-ene-11-ol by atsK. Drim-8-ene-11-ol is converted to confertifolin, probably by the cytochrome P450 monooxygenase astD and/or the dehydrogenase astE. The cytochrome P450 monooxygenases astB, astF and astJ then hydroxylate confertifolin at C6, C14, or C15 to form trihydroxy confertifolin. The nonribosomal peptide synthetase astA catalyzes ester bond formation between trihydroxy contifolin and benzoic acid (BA) or 4-hydroxy benzoic acid (4HBA), leading to the formation of dideacetyl astellolides A and B, respectively. Finally, the O-acetyltransferase astG converts dideacetyl astellolides A and B into deacetyl astellolides A and B. The polypeptide is Nonribosomal peptide synthetase astA (Aspergillus oryzae (strain ATCC 42149 / RIB 40) (Yellow koji mold)).